A 102-amino-acid chain; its full sequence is MFAIIETGGKQIKVEEGQEIFVEKLDVNEGDTFTFDKVLFVGGDSVKVGAPTVEGATVTATVNKQGRGKKITVFTYKRRKNSXRKKGHRQPYTKLTIDKINA.

It belongs to the bacterial ribosomal protein bL21 family. In terms of assembly, part of the 50S ribosomal subunit. Contacts protein L20.

Its function is as follows. This protein binds to 23S rRNA in the presence of protein L20. The sequence is that of Large ribosomal subunit protein bL21 from Staphylococcus aureus.